The sequence spans 185 residues: Ribosome-recycling factor (185 aa).

The protein belongs to the RRF family.

It is found in the cytoplasm. In terms of biological role, responsible for the release of ribosomes from messenger RNA at the termination of protein biosynthesis. May increase the efficiency of translation by recycling ribosomes from one round of translation to another. The protein is Ribosome-recycling factor of Lacticaseibacillus casei (strain BL23) (Lactobacillus casei).